The following is a 370-amino-acid chain: Putative 8-amino-7-oxononanoate synthase (370 aa).

Arg-20 serves as a coordination point for substrate. 95 to 96 is a pyridoxal 5'-phosphate binding site; the sequence is GY. Residue His-120 coordinates substrate. Residues Ser-167, 192–195, and 223–226 each bind pyridoxal 5'-phosphate; these read DDAH and TLSK. N6-(pyridoxal phosphate)lysine is present on Lys-226. Thr-337 is a binding site for substrate.

This sequence belongs to the class-II pyridoxal-phosphate-dependent aminotransferase family. BioF subfamily. Homodimer. Pyridoxal 5'-phosphate is required as a cofactor.

It carries out the reaction 6-carboxyhexanoyl-[ACP] + L-alanine + H(+) = (8S)-8-amino-7-oxononanoate + holo-[ACP] + CO2. It functions in the pathway cofactor biosynthesis; biotin biosynthesis. Catalyzes the decarboxylative condensation of pimeloyl-[acyl-carrier protein] and L-alanine to produce 8-amino-7-oxononanoate (AON), [acyl-carrier protein], and carbon dioxide. In Methanococcus vannielii (strain ATCC 35089 / DSM 1224 / JCM 13029 / OCM 148 / SB), this protein is Putative 8-amino-7-oxononanoate synthase (bioF).